The chain runs to 120 residues: Large ribosomal subunit protein uL18 (120 aa).

It belongs to the universal ribosomal protein uL18 family. Part of the 50S ribosomal subunit; part of the 5S rRNA/L5/L18/L25 subcomplex. Contacts the 5S and 23S rRNAs.

This is one of the proteins that bind and probably mediate the attachment of the 5S RNA into the large ribosomal subunit, where it forms part of the central protuberance. The chain is Large ribosomal subunit protein uL18 from Rhodopseudomonas palustris (strain HaA2).